A 374-amino-acid polypeptide reads, in one-letter code: Serpin B8 (374 aa).

It belongs to the serpin family. Ov-serpin subfamily.

Its subcellular location is the cytoplasm. Functionally, has an important role in epithelial desmosome-mediated cell-cell adhesion. The protein is Serpin B8 (SERPINB8) of Homo sapiens (Human).